The primary structure comprises 555 residues: Wee1-like protein kinase 2-A (555 aa).

Disordered stretches follow at residues 1 to 81 (MRTA…SVGA) and 149 to 175 (FTPE…DCRT). Residues 38 to 48 (SPVSSWRTNNC) show a composition bias toward polar residues. Positions 68-78 (SPSSDYSPDPS) are enriched in low complexity. Residues 149–160 (FTPESYRQTHFQ) are compositionally biased toward polar residues. One can recognise a Protein kinase domain in the interval 210–480 (FLEIEKIGAG…AASLAKNSVL (271 aa)). Residues 216–224 (IGAGEFGSV) and Lys239 contribute to the ATP site. Asp337 serves as the catalytic Proton acceptor. Asn342 and Asp374 together coordinate Mg(2+). A coiled-coil region spans residues 487–513 (AAQLQKQLNVEKFKTAMLERELKAAKL). The residue at position 549 (Ser549) is a Phosphoserine.

Belongs to the protein kinase superfamily. Ser/Thr protein kinase family. WEE1 subfamily. As to quaternary structure, interacts with prmt5; this promotes protesomal degradation of wee2-a in the nucleus. The interaction with prmt5 is disrupted upon activation of the DNA replication checkpoint. In terms of processing, subject to proteasomal degradation in the nucleus. As to expression, detected in egg (at protein level). Oocyte-specific maternally supplied protein. Present in immature and mature oocytes and in early (pregastrula) embryos, but not in post-gastrula embryos.

The protein localises to the nucleus. It is found in the cytoplasm. The protein resides in the cytosol. The enzyme catalyses L-tyrosyl-[protein] + ATP = O-phospho-L-tyrosyl-[protein] + ADP + H(+). Its function is as follows. Oocyte-specific protein tyrosine kinase that phosphorylates and inhibits cdk1 and acts as a key regulator of meiosis. Required to maintain meiotic arrest in oocytes by phosphorylating cdk1 at 'Tyr-15', which inhibits cdk1 activity and prevents meiotic reentry. Negative regulator of mitosis. Involved in the mitotic DNA replication checkpoint. The protein is Wee1-like protein kinase 2-A (wee2-a) of Xenopus laevis (African clawed frog).